The primary structure comprises 408 residues: MQIPNRLQPFYENLVFERHDNQMVINFGPQHPSAHGQLRLILELEGEKVTRAVPDVGYLHRGMEKMGENMIYNEFIPTTDRMDYIAASSNNHAFALTVEKLLGIEVPRRAKVIRMMIVELNRIISHLFWLATHALDVGAMSIFLYCFREREFAMDLMEDYCGARLTHSSIRIGGVPLDLPAGWLEKLKSFLEKMPENIALYEGLLSENRIWKMRLENVGIITPEMAKSWGCSGVALRGSGIQWDLRKEQPYELYDEVEFDIPVSDSGDSYGRYKLYMEEMRQTVKILHQLIEMYPSTSSEIMAHAPQYISAPKEQIMTQNYSLMQHFVLVTQGMRPPVGEVYCATESPKGELGFFIRSEGEPYPYRLKIRAPSFYHTGILQDLLPGGYIADVVTIIGNLNIVFGEIDR.

This sequence belongs to the complex I 49 kDa subunit family. In terms of assembly, NDH-1 is composed of 14 different subunits. Subunits NuoB, C, D, E, F, and G constitute the peripheral sector of the complex.

The protein localises to the cell inner membrane. It carries out the reaction a quinone + NADH + 5 H(+)(in) = a quinol + NAD(+) + 4 H(+)(out). In terms of biological role, NDH-1 shuttles electrons from NADH, via FMN and iron-sulfur (Fe-S) centers, to quinones in the respiratory chain. The immediate electron acceptor for the enzyme in this species is believed to be ubiquinone. Couples the redox reaction to proton translocation (for every two electrons transferred, four hydrogen ions are translocated across the cytoplasmic membrane), and thus conserves the redox energy in a proton gradient. The chain is NADH-quinone oxidoreductase subunit D from Wolinella succinogenes (strain ATCC 29543 / DSM 1740 / CCUG 13145 / JCM 31913 / LMG 7466 / NCTC 11488 / FDC 602W) (Vibrio succinogenes).